The sequence spans 433 residues: Glutamate-1-semialdehyde 2,1-aminomutase (433 aa).

N6-(pyridoxal phosphate)lysine is present on Lys-271.

The protein belongs to the class-III pyridoxal-phosphate-dependent aminotransferase family. HemL subfamily. As to quaternary structure, homodimer. Pyridoxal 5'-phosphate is required as a cofactor.

The protein localises to the cytoplasm. It catalyses the reaction (S)-4-amino-5-oxopentanoate = 5-aminolevulinate. The protein operates within porphyrin-containing compound metabolism; protoporphyrin-IX biosynthesis; 5-aminolevulinate from L-glutamyl-tRNA(Glu): step 2/2. It participates in porphyrin-containing compound metabolism; chlorophyll biosynthesis. This Prochlorococcus marinus subsp. pastoris (strain CCMP1986 / NIES-2087 / MED4) protein is Glutamate-1-semialdehyde 2,1-aminomutase.